Here is a 961-residue protein sequence, read N- to C-terminus: Mitogen-activated protein kinase kinase kinase 13-B (961 aa).

Residues 89–115 (RDQDEPENTAPQGSSHSGDGGNNSANE) form a disordered region. Low complexity predominate over residues 101-114 (GSSHSGDGGNNSAN). Residues 171-412 (ISELQWLGSG…FRQILMHLDI (242 aa)) form the Protein kinase domain. Residues 177 to 185 (LGSGAQGAV) and Lys198 contribute to the ATP site. Asp282 serves as the catalytic Proton acceptor. 2 leucine-zipper regions span residues 436-457 (VKKHFEKIKSEGTCIHRLDEEL) and 489-510 (LSSIMLQLEVREKELTRREQTV). Positions 460 to 497 (RRREELRHALDIREHYERKLERANNLYMELSSIMLQLE) form a coiled coil. Disordered regions lie at residues 507–644 (EQTV…ETSQ), 796–874 (TPPA…DVAC), and 933–961 (NAESDCDSSEGECSDATVRTNNPVNSSTW). Positions 563-580 (AEGSAASASPISGSPKTS) are enriched in low complexity. A compositionally biased stretch (basic residues) spans 586–598 (GRYRSKPRHRRGN). Low complexity predominate over residues 613 to 628 (QESPAPSQQSSQHQTP). The span at 813-826 (DSSEGEEGEVDSEV) shows a compositional bias: acidic residues. The acidic stretch occupies residues 814–827 (SSEGEEGEVDSEVE). A compositionally biased stretch (polar residues) spans 839 to 854 (STCQSYSTFSSENFSV). A compositionally biased stretch (acidic residues) spans 934 to 945 (AESDCDSSEGEC). Residues 949-961 (TVRTNNPVNSSTW) are compositionally biased toward polar residues.

The protein belongs to the protein kinase superfamily. Ser/Thr protein kinase family.

The protein localises to the cytoplasm. It localises to the membrane. The catalysed reaction is L-seryl-[protein] + ATP = O-phospho-L-seryl-[protein] + ADP + H(+). It carries out the reaction L-threonyl-[protein] + ATP = O-phospho-L-threonyl-[protein] + ADP + H(+). Functionally, may have a role in the JNK signaling pathway. This chain is Mitogen-activated protein kinase kinase kinase 13-B (map3k13-b), found in Xenopus laevis (African clawed frog).